Consider the following 183-residue polypeptide: Ribosome-recycling factor (183 aa).

The protein belongs to the RRF family.

Its subcellular location is the cytoplasm. Functionally, responsible for the release of ribosomes from messenger RNA at the termination of protein biosynthesis. May increase the efficiency of translation by recycling ribosomes from one round of translation to another. This is Ribosome-recycling factor from Deinococcus radiodurans (strain ATCC 13939 / DSM 20539 / JCM 16871 / CCUG 27074 / LMG 4051 / NBRC 15346 / NCIMB 9279 / VKM B-1422 / R1).